The chain runs to 300 residues: MKNLTHLQRLEAEAIHVFREVAATFSNPVMLYSVSKDSSVMLHLAMKAFYPAPPPFPFLHVDTTWKFREMIEFRDAQAREKGFELLVHVNEQGVRDGIGPFTHGSNVHTHIMKTVGLRQALDKYRFDAAFGGARRDEEKSRAKERIFSFRNAQHGWDPKNQRPEMWKIYNTRVSKGESIRVFPLSNWTELDIWQYILQENIPIVPLYFAARRPVVERDGMLIMVDDDRMKLRPGEPVENRLVRFRTLGCYPLTGAIPSSAANLSDIVEEMLIARTSERQGRAIDRDEAGSMEKKKREGYF.

The interval 281 to 300 (RAIDRDEAGSMEKKKREGYF) is disordered.

It belongs to the PAPS reductase family. CysD subfamily. In terms of assembly, heterodimer composed of CysD, the smaller subunit, and CysN.

It catalyses the reaction sulfate + ATP + H(+) = adenosine 5'-phosphosulfate + diphosphate. The protein operates within sulfur metabolism; hydrogen sulfide biosynthesis; sulfite from sulfate: step 1/3. Its function is as follows. With CysN forms the ATP sulfurylase (ATPS) that catalyzes the adenylation of sulfate producing adenosine 5'-phosphosulfate (APS) and diphosphate, the first enzymatic step in sulfur assimilation pathway. APS synthesis involves the formation of a high-energy phosphoric-sulfuric acid anhydride bond driven by GTP hydrolysis by CysN coupled to ATP hydrolysis by CysD. In Brucella melitensis biotype 2 (strain ATCC 23457), this protein is Sulfate adenylyltransferase subunit 2.